A 272-amino-acid polypeptide reads, in one-letter code: Acetylglutamate kinase (272 aa).

Residues G46 to A47, R68, and N166 each bind substrate.

This sequence belongs to the acetylglutamate kinase family. ArgB subfamily.

The protein resides in the cytoplasm. The catalysed reaction is N-acetyl-L-glutamate + ATP = N-acetyl-L-glutamyl 5-phosphate + ADP. The protein operates within amino-acid biosynthesis; L-arginine biosynthesis; N(2)-acetyl-L-ornithine from L-glutamate: step 2/4. Catalyzes the ATP-dependent phosphorylation of N-acetyl-L-glutamate. The sequence is that of Acetylglutamate kinase from Dehalococcoides mccartyi (strain CBDB1).